Consider the following 205-residue polypeptide: Small ribosomal subunit protein uS5 (205 aa).

An S5 DRBM domain is found at 49 to 112 (LVDEVLCIDM…TNAKLNIVKV (64 aa)).

The protein belongs to the universal ribosomal protein uS5 family. As to quaternary structure, part of the 30S ribosomal subunit. Contacts protein S4.

In terms of biological role, with S4 and S12 plays an important role in translational accuracy. This Methanocorpusculum labreanum (strain ATCC 43576 / DSM 4855 / Z) protein is Small ribosomal subunit protein uS5.